The primary structure comprises 527 residues: Flagellar radial spoke protein 5 (527 aa).

The tract at residues 1–22 (MSEPGEEPVAAPAGPAPDPVLN) is disordered. Residues 101–153 (RKWNELTIQAKQLEQEVAGLKGPDAEAKQAELENVKVQIADAEAAVAEVKQSF) are a coiled coil. Asymmetric dimethylarginine is present on residues arginine 191 and arginine 366.

This sequence belongs to the aldo/keto reductase family. In terms of processing, asymmetrically dimethylated at Arg-191 and Arg-366 during flagellum resorption. Probably methylated by PRMT1.

Its subcellular location is the cytoplasm. It is found in the cytoskeleton. It localises to the flagellum axoneme. Flagellar radial spokes contribute to the regulation of dynein arm activity and thus the pattern of flagellar bending. They consist of a thin stalk, which is attached to the a subfiber of the outer doublet microtubule, and a bulbous head, which is attached to the stalk and appears to interact with the projections from the central pair of microtubules. The polypeptide is Flagellar radial spoke protein 5 (Chlamydomonas reinhardtii (Chlamydomonas smithii)).